Consider the following 331-residue polypeptide: 6-phosphogluconolactonase (331 aa).

Belongs to the cycloisomerase 2 family.

The catalysed reaction is 6-phospho-D-glucono-1,5-lactone + H2O = 6-phospho-D-gluconate + H(+). It participates in carbohydrate degradation; pentose phosphate pathway; D-ribulose 5-phosphate from D-glucose 6-phosphate (oxidative stage): step 2/3. In terms of biological role, catalyzes the hydrolysis of 6-phosphogluconolactone to 6-phosphogluconate. This is 6-phosphogluconolactonase from Sodalis glossinidius (strain morsitans).